The sequence spans 501 residues: MVQCRPPQEFSFGPRALKDALISCDLALKQLYTSAFSPSERLFLSEAYNPHRTLFSTLLIHSAFDWLLSRPEAPEDFETFHASLQLRKQSLARKHIYLQPIDLSEGLAGCPLLDHLRSCAEAFFLGLRVKCLPSVASASINCCSRPARDTDGLQLHTDGILSFLKNNKPGDALCVLGLTLADLYPHDAWTFTFGRFLPGHEVGVCSFARFSGEFLQAGSSIPDSALLEAAAGGPETLPQEGGQTLCYSALGMVQCCKVTCHELCHLLGLGSCRWLRCLLQGVLSLDEALRRPLDLCPICLRKLHHLLGFRLLERYKRLHTWTRVMLEMWSGQEAGEPSVSEDTLPFSADSGMGCESDTEPVTSPSEPVTPDAWSHTFPDGPEPVSEEGLSSLAASEVLLKLGGPVDALEEYRQWLDACIQALEREVAEEELVQVDAAVDALGRWEMFTGQLPVTKQYMPCVKDNVGLRRVLGDKFSSLRRRLSSRRLAKASSSQCHWGAEN.

His-261 is a Zn(2+) binding site. The active-site Proton acceptor is Glu-262. The Zn(2+) site is built by His-265, Cys-272, Cys-277, Cys-296, and Cys-299. Positions 349 to 370 (DSGMGCESDTEPVTSPSEPVTP) are disordered.

This sequence belongs to the peptidase M54 family. Zn(2+) is required as a cofactor.

Its function is as follows. Probable zinc metalloprotease. In Rattus norvegicus (Rat), this protein is Archaemetzincin-1 (Amz1).